A 147-amino-acid chain; its full sequence is Hemoglobin subunit beta-1 (147 aa).

V2 carries the post-translational modification N-acetylvaline. Residues 3-147 (HLTDAEKAAV…VASALAHKYH (145 aa)) enclose the Globin domain. Residue K18 is modified to N6-succinyllysine. Phosphoserine is present on residues S45, S51, and S53. At K60 the chain carries N6-succinyllysine. 2 residues coordinate heme b: H64 and H93. Position 105 is an asymmetric dimethylarginine (R105). A Phosphothreonine modification is found at T124.

This sequence belongs to the globin family. Heterotetramer of two alpha chains and two beta chains. In terms of tissue distribution, red blood cells.

Its function is as follows. Involved in oxygen transport from the lung to the various peripheral tissues. This chain is Hemoglobin subunit beta-1 (Hbb), found in Rattus norvegicus (Rat).